Reading from the N-terminus, the 225-residue chain is UPF0758 protein NMB1038 (225 aa).

The MPN domain maps to valine 102–methionine 224. Positions 173, 175, and 186 each coordinate Zn(2+). The short motif at histidine 173 to aspartate 186 is the JAMM motif element.

The protein belongs to the UPF0758 family.

The sequence is that of UPF0758 protein NMB1038 from Neisseria meningitidis serogroup B (strain ATCC BAA-335 / MC58).